The chain runs to 136 residues: Small ribosomal subunit protein uS9 (136 aa).

Belongs to the universal ribosomal protein uS9 family.

In Borrelia garinii subsp. bavariensis (strain ATCC BAA-2496 / DSM 23469 / PBi) (Borreliella bavariensis), this protein is Small ribosomal subunit protein uS9.